Reading from the N-terminus, the 264-residue chain is Thymidylate synthase (264 aa).

Position 21 (Arg-21) interacts with dUMP. His-51 serves as a coordination point for (6R)-5,10-methylene-5,6,7,8-tetrahydrofolate. 126-127 (RR) contacts dUMP. The Nucleophile role is filled by Cys-146. DUMP contacts are provided by residues 166–169 (RSAD), Asn-177, and 207–209 (HIY). Asp-169 lines the (6R)-5,10-methylene-5,6,7,8-tetrahydrofolate pocket. Ala-263 is a binding site for (6R)-5,10-methylene-5,6,7,8-tetrahydrofolate.

This sequence belongs to the thymidylate synthase family. Bacterial-type ThyA subfamily. In terms of assembly, homodimer.

Its subcellular location is the cytoplasm. The enzyme catalyses dUMP + (6R)-5,10-methylene-5,6,7,8-tetrahydrofolate = 7,8-dihydrofolate + dTMP. The protein operates within pyrimidine metabolism; dTTP biosynthesis. In terms of biological role, catalyzes the reductive methylation of 2'-deoxyuridine-5'-monophosphate (dUMP) to 2'-deoxythymidine-5'-monophosphate (dTMP) while utilizing 5,10-methylenetetrahydrofolate (mTHF) as the methyl donor and reductant in the reaction, yielding dihydrofolate (DHF) as a by-product. This enzymatic reaction provides an intracellular de novo source of dTMP, an essential precursor for DNA biosynthesis. In Ruminiclostridium cellulolyticum (strain ATCC 35319 / DSM 5812 / JCM 6584 / H10) (Clostridium cellulolyticum), this protein is Thymidylate synthase.